A 395-amino-acid polypeptide reads, in one-letter code: Nucleoside diphosphate kinase homolog 7 (395 aa).

The DM10 domain occupies 22–110; it reads QSERFAFIAE…YTARQLGSRK (89 aa).

The protein belongs to the NDK family. Component of sperm flagellar doublet microtubules. Component of the gamma-tubulin ring complex. Widely expressed. Expressed in the flagellum of epididymal sperm but not in testicular sperm (at protein level).

It localises to the cytoplasm. Its subcellular location is the cytoskeleton. The protein resides in the microtubule organizing center. The protein localises to the centrosome. It is found in the nucleus. It localises to the spindle. Its subcellular location is the cilium axoneme. The protein resides in the flagellum axoneme. The protein localises to the cell projection. It is found in the cilium. Possesses an intrinsic kinase activity. Displays 3'-5' exonuclease activity with a preference for single-stranded DNA. Does not seem to have nucleoside diphosphate kinase activity. Functional component of the gamma-tubulin ring complex, implicated in the regulation of the microtubule-nucleating activity of the gamma-tubulin ring complex in centrosomes, in a kinase activity-dependent manner. Part of the dynein-decorated doublet microtubules (DMTs) in cilia axoneme, which is required for motile cilia beating. The sequence is that of Nucleoside diphosphate kinase homolog 7 (Nme7) from Rattus norvegicus (Rat).